The chain runs to 1411 residues: DNA-directed RNA polymerase subunit beta' (1411 aa).

Positions 70, 72, 85, and 88 each coordinate Zn(2+). Mg(2+)-binding residues include Asp458, Asp460, and Asp462. Zn(2+) contacts are provided by Cys813, Cys887, Cys894, and Cys897. Residues 1391-1411 are disordered; it reads AQAEVPELDGSSVTASDAAAD.

It belongs to the RNA polymerase beta' chain family. In terms of assembly, the RNAP catalytic core consists of 2 alpha, 1 beta, 1 beta' and 1 omega subunit. When a sigma factor is associated with the core the holoenzyme is formed, which can initiate transcription. Mg(2+) is required as a cofactor. It depends on Zn(2+) as a cofactor.

It carries out the reaction RNA(n) + a ribonucleoside 5'-triphosphate = RNA(n+1) + diphosphate. In terms of biological role, DNA-dependent RNA polymerase catalyzes the transcription of DNA into RNA using the four ribonucleoside triphosphates as substrates. The polypeptide is DNA-directed RNA polymerase subunit beta' (Verminephrobacter eiseniae (strain EF01-2)).